We begin with the raw amino-acid sequence, 830 residues long: Nucleolar complex-associated protein 3 (830 aa).

Disordered stretches follow at residues 1–22 (MGKN…DVAE), 67–86 (KYEE…GNGE), 112–169 (KSKL…EETP), 391–436 (GKPN…KIRD), and 802–830 (LQSE…KKQI). Coiled coils occupy residues 61–81 (VMTV…LQEE) and 111–156 (KKSK…HEKD). Basic and acidic residues predominate over residues 67–84 (KYEEERSKRKTLQEEKGN). Residues 118 to 129 (AETDEAEKDVLE) show a composition bias toward acidic residues. Residues 130–140 (DEHVLNKSQRR) show a composition bias toward basic and acidic residues. Positions 138-145 (QRREKAKK) match the Nuclear localization signal 1 motif. A compositionally biased stretch (basic residues) spans 141–150 (EKAKKSKREA). Residues 159-168 (DEILQEEEET) are compositionally biased toward acidic residues. A compositionally biased stretch (basic and acidic residues) spans 391–400 (GKPNKEDEHN). Positions 400-429 (NKKYKKNNKRKTQEEQNQVQENERKKSKKD) form a coiled coil. Residues 408–415 (KRKTQEEQ) carry the Nuclear localization signal 2 motif. Residues 420-436 (ENERKKSKKDMMSKIRD) are compositionally biased toward basic and acidic residues. Positions 806-813 (EKKPLKKQ) match the Nuclear localization signal 3 motif. The span at 817 to 830 (VKKKLKNPKSKKQI) shows a compositional bias: basic residues.

The protein belongs to the CBF/MAK21 family. In terms of assembly, component of nucleolar complexes. Interacts with RBL and NOC2 in both the nucleolus and nucleoplasm.

It is found in the nucleus. The protein resides in the nucleolus. The protein localises to the nucleoplasm. Its function is as follows. May be required for synthesis of 60S ribosomal subunits and the transport of pre-ribosomes from the nucleoplasm to the cytoplasm. Also required for initiation of DNA replication. This is Nucleolar complex-associated protein 3 from Arabidopsis thaliana (Mouse-ear cress).